Consider the following 648-residue polypeptide: Putative potassium transport protein DDB_G0292412 (648 aa).

A helical transmembrane segment spans residues 48-68; the sequence is LFLLVILVQLGSTVLLTLPIV. N-linked (GlcNAc...) asparagine glycosylation is present at asparagine 81. 2 disordered regions span residues 106–145 and 223–261; these read HDFKDDDDENDNNNNEENDDNDDESYQHNNNNNEEHDDND and QQQQQPSTTTTTTTTTNSTLNKSTNNSTNNNNNTNDSQS. The segment covering 110–129 has biased composition (acidic residues); sequence DDDDENDNNNNEENDDNDDE. Positions 199-227 form a coiled coil; the sequence is IIQQQQQQQQQQQQQQQQQQQQQQQQQQQ. Asparagine 239, asparagine 243, asparagine 247, asparagine 248, asparagine 254, and asparagine 257 each carry an N-linked (GlcNAc...) asparagine glycan. Helical transmembrane passes span 313 to 333, 353 to 373, 385 to 405, 443 to 463, 472 to 491, and 505 to 525; these read LLVIIPCYIITIYILGFISIG, GWWWSLFHTFSAFNNAGLALF, FLLITLSILIFLGNTLFPVFL, VQLFVIWCIFNVSQIALMALL, NMNYGTILLNYYFSSISTRT, and SVLLLFVGLMFVSSYPFIISL. Asparagine 536 is a glycosylation site (N-linked (GlcNAc...) asparagine). Helical transmembrane passes span 550–570, 571–591, and 592–612; these read IFVPYICILFIAIFESQLLES, GVITVFQILFEAISAFGNVGL, and SISITLSTYSKLVFIALMLAG.

The protein belongs to the TrkH potassium transport family.

The protein resides in the membrane. Its function is as follows. May function as a potassium transporter. This chain is Putative potassium transport protein DDB_G0292412, found in Dictyostelium discoideum (Social amoeba).